We begin with the raw amino-acid sequence, 150 residues long: Deoxyuridine 5'-triphosphate nucleotidohydrolase (150 aa).

Substrate is bound by residues 69–71, Asn-82, and 86–88; these read RSG and LID.

Belongs to the dUTPase family. The cofactor is Mg(2+).

It catalyses the reaction dUTP + H2O = dUMP + diphosphate + H(+). Its pathway is pyrimidine metabolism; dUMP biosynthesis; dUMP from dCTP (dUTP route): step 2/2. This enzyme is involved in nucleotide metabolism: it produces dUMP, the immediate precursor of thymidine nucleotides and it decreases the intracellular concentration of dUTP so that uracil cannot be incorporated into DNA. The polypeptide is Deoxyuridine 5'-triphosphate nucleotidohydrolase (Methylobacillus flagellatus (strain ATCC 51484 / DSM 6875 / VKM B-1610 / KT)).